The chain runs to 377 residues: Chaperone protein DnaJ (377 aa).

The 66-residue stretch at 5–70 folds into the J domain; sequence DFYEVLGVDR…EKRSAYDRMG (66 aa). Residues 136–214 form a CR-type zinc finger; it reads GCKKEISFTA…CHGTGVKDKS (79 aa). Residues Cys-149, Cys-152, Cys-166, Cys-169, Cys-188, Cys-191, Cys-202, and Cys-205 each contribute to the Zn(2+) site. 4 CXXCXGXG motif repeats span residues 149–156, 166–173, 188–195, and 202–209; these read CETCDGKG, CSTCGGHG, CPNCGGSG, and CNDCHGTG. A disordered region spans residues 353-377; the sequence is LDGDSKHHQSPKKKSFFEKLGDLFD. Basic and acidic residues predominate over residues 367–377; it reads SFFEKLGDLFD.

The protein belongs to the DnaJ family. In terms of assembly, homodimer. Zn(2+) serves as cofactor.

It is found in the cytoplasm. Participates actively in the response to hyperosmotic and heat shock by preventing the aggregation of stress-denatured proteins and by disaggregating proteins, also in an autonomous, DnaK-independent fashion. Unfolded proteins bind initially to DnaJ; upon interaction with the DnaJ-bound protein, DnaK hydrolyzes its bound ATP, resulting in the formation of a stable complex. GrpE releases ADP from DnaK; ATP binding to DnaK triggers the release of the substrate protein, thus completing the reaction cycle. Several rounds of ATP-dependent interactions between DnaJ, DnaK and GrpE are required for fully efficient folding. Also involved, together with DnaK and GrpE, in the DNA replication of plasmids through activation of initiation proteins. The polypeptide is Chaperone protein DnaJ (Psychrobacter sp. (strain PRwf-1)).